A 1613-amino-acid polypeptide reads, in one-letter code: Reverse gyrase (1613 aa).

Residues methionine 1 to glutamate 38 form an RG N-terminal-type zinc finger. The Zn(2+) site is built by cysteine 10, cysteine 13, cysteine 27, and cysteine 30. ATP-binding positions include glutamine 83 and valine 100–serine 107. Positions alanine 87–isoleucine 291 constitute a Helicase ATP-binding domain. Positions aspartate 203–aspartate 206 match the DEAD box motif. A Helicase C-terminal domain is found at serine 310–isoleucine 525. The tract at residues aspartate 546 to arginine 1613 is topoisomerase I. Positions serine 550–isoleucine 712 constitute a Toprim domain. Mg(2+) contacts are provided by glutamate 556 and aspartate 681. Positions aspartate 733–arginine 1613 constitute a Topo IA-type catalytic domain. The 130-residue stretch at phenylalanine 1070 to isoleucine 1199 folds into the DOD-type homing endonuclease domain. Catalysis depends on tyrosine 1363, which acts as the O-(5'-phospho-DNA)-tyrosine intermediate.

It in the N-terminal section; belongs to the DEAD box helicase family. DDVD subfamily. In the C-terminal section; belongs to the type IA topoisomerase family. As to quaternary structure, monomer. Requires Zn(2+) as cofactor. The cofactor is Mg(2+). In terms of processing, this protein undergoes a protein self splicing that involves a post-translational excision of the intervening region (intein) followed by peptide ligation.

The protein localises to the cytoplasm. It catalyses the reaction ATP + H2O = ADP + phosphate + H(+). Modifies the topological state of DNA by introducing positive supercoils in an ATP-dependent process, increasing the linking number in steps of +1. Binds to single-stranded DNA, transiently cleaves and then rejoins the ends, introducing a positive supercoil in the process. The scissile phosphodiester is attacked by the catalytic tyrosine of the enzyme, resulting in the formation of a DNA-(5'-phosphotyrosyl)-enzyme intermediate. Probably involved in rewinding DNA strands in regions of the chromosome that have opened up to allow replication, transcription, DNA repair and/or for DNA protection. The polypeptide is Reverse gyrase (Methanocaldococcus jannaschii (strain ATCC 43067 / DSM 2661 / JAL-1 / JCM 10045 / NBRC 100440) (Methanococcus jannaschii)).